Reading from the N-terminus, the 697-residue chain is Serotransferrin (697 aa).

Residues 1 to 19 form the signal peptide; the sequence is MRLTVGALLACAALGLCLA. 2 consecutive Transferrin-like domains span residues 25–347 and 360–682; these read VKWC…NQQE and VKWC…NMRK. 2 cysteine pairs are disulfide-bonded: Cys-28/Cys-67 and Cys-38/Cys-58. Residue Arg-42 is modified to Dimethylated arginine. Residues Asp-82 and Tyr-114 each coordinate Fe(3+). 8 cysteine pairs are disulfide-bonded: Cys-137–Cys-213, Cys-156–Cys-350, Cys-177–Cys-193, Cys-180–Cys-196, Cys-190–Cys-198, Cys-246–Cys-260, Cys-363–Cys-395, and Cys-373–Cys-386. 4 residues coordinate hydrogencarbonate: Thr-139, Arg-143, Ala-145, and Gly-146. Tyr-207 contributes to the Fe(3+) binding site. His-268 is a binding site for Fe(3+). Phosphoserine is present on Ser-388. Residues Asp-410 and Tyr-448 each coordinate Fe(3+). Intrachain disulfides connect Cys-420-Cys-692, Cys-435-Cys-655, Cys-472-Cys-543, Cys-496-Cys-683, Cys-506-Cys-520, Cys-517-Cys-526, Cys-583-Cys-597, and Cys-633-Cys-638. Hydrogencarbonate is bound by residues Thr-474, Arg-478, Ala-480, and Gly-481. Asn-513 carries an N-linked (GlcNAc...) asparagine glycan. Tyr-537 lines the Fe(3+) pocket. His-605 is a binding site for Fe(3+). Residue Ser-684 is modified to Phosphoserine.

This sequence belongs to the transferrin family. In terms of assembly, monomer. Part of a complex composed of SLC40A1/ferroportin, TF/transferrin and HEPH/hephaestin that transfers iron from cells to transferrin. Expressed by the liver and secreted in plasma.

It localises to the secreted. Functionally, transferrins are iron binding transport proteins which can bind two Fe(3+) ions in association with the binding of an anion, usually bicarbonate. It is responsible for the transport of iron from sites of absorption and heme degradation to those of storage and utilization. Serum transferrin may also have a further role in stimulating cell proliferation. The sequence is that of Serotransferrin (Tf) from Mus musculus (Mouse).